A 402-amino-acid chain; its full sequence is CCA-adding enzyme (402 aa).

Residues G32 and R35 each contribute to the ATP site. CTP contacts are provided by G32 and R35. D45 and D47 together coordinate Mg(2+). ATP is bound by residues R119, D162, R165, R168, and R171. CTP is bound by residues R119, D162, R165, R168, and R171.

This sequence belongs to the tRNA nucleotidyltransferase/poly(A) polymerase family. Bacterial CCA-adding enzyme type 3 subfamily. As to quaternary structure, homodimer. It depends on Mg(2+) as a cofactor.

It catalyses the reaction a tRNA precursor + 2 CTP + ATP = a tRNA with a 3' CCA end + 3 diphosphate. The enzyme catalyses a tRNA with a 3' CCA end + 2 CTP + ATP = a tRNA with a 3' CCACCA end + 3 diphosphate. Functionally, catalyzes the addition and repair of the essential 3'-terminal CCA sequence in tRNAs without using a nucleic acid template. Adds these three nucleotides in the order of C, C, and A to the tRNA nucleotide-73, using CTP and ATP as substrates and producing inorganic pyrophosphate. tRNA 3'-terminal CCA addition is required both for tRNA processing and repair. Also involved in tRNA surveillance by mediating tandem CCA addition to generate a CCACCA at the 3' terminus of unstable tRNAs. While stable tRNAs receive only 3'-terminal CCA, unstable tRNAs are marked with CCACCA and rapidly degraded. This is CCA-adding enzyme from Lactococcus lactis subsp. cremoris (strain MG1363).